Reading from the N-terminus, the 877-residue chain is Protein SEY1 homolog (877 aa).

At 1–735 the chain is on the cytoplasmic side; the sequence is MVAFAGGART…LRSIEGEKQN (735 aa). Residues 49 to 307 enclose the GB1/RHD3-type G domain; it reads GITYHVVGVL…VPLDGIPSYL (259 aa). Residue 59-66 coordinates GTP; that stretch reads GGQSSGKS. Positions 388-410 form a coiled coil; the sequence is RIDIVRKTEAELEEELLKVELKL. Residues 736–756 form a helical membrane-spanning segment; that stretch reads LPAWVLPVLLLLGWNEIWYVL. At 757–759 the chain is on the lumenal side; it reads SSP. The helical transmembrane segment at 760 to 780 threads the bilayer; that stretch reads VLLVVVVIIAAVFLRGFLLTQ. The Cytoplasmic portion of the chain corresponds to 781 to 877; that stretch reads WAIFEETGPT…KEEEVPTQKE (97 aa). The tract at residues 850–877 is disordered; that stretch reads PTVLPPSTTSATLTRRLKKEEEVPTQKE. Basic and acidic residues predominate over residues 867 to 877; that stretch reads KKEEEVPTQKE.

The protein belongs to the TRAFAC class dynamin-like GTPase superfamily. GB1/RHD3 GTPase family. RHD3 subfamily.

The protein resides in the endoplasmic reticulum membrane. Functionally, probable GTP-binding protein that may be involved in cell development. The polypeptide is Protein SEY1 homolog (Trypanosoma cruzi (strain CL Brener)).